The sequence spans 478 residues: Hemolysin secretion protein D, chromosomal (478 aa).

Topologically, residues 1 to 59 are cytoplasmic; the sequence is MKTWLMGFSEFLLRYKLVWSETWKIRKQLDTPVREKDENEFLPAHLELIETPVSRRPRL. The helical; Signal-anchor for type II membrane protein transmembrane segment at 60-80 threads the bilayer; sequence VAYFIMGFLVIAFILSVLGQV. Residues 81–478 lie on the Periplasmic side of the membrane; the sequence is EIVATANGKL…ESVTESLHER (398 aa).

This sequence belongs to the membrane fusion protein (MFP) (TC 8.A.1) family.

Its subcellular location is the cell inner membrane. Functionally, involved in the transport of hemolysin A. The sequence is that of Hemolysin secretion protein D, chromosomal (hlyD) from Escherichia coli.